The sequence spans 426 residues: Probable imidazolonepropionase (426 aa).

The 4-imidazolone-5-propanoate site is built by Tyr-159 and His-192. Tyr-159 is a binding site for N-formimidoyl-L-glutamate. His-260 contacts Fe(3+). Residue His-260 participates in Zn(2+) binding. A 4-imidazolone-5-propanoate-binding site is contributed by Glu-263. Asp-334 contacts Fe(3+). Asp-334 serves as a coordination point for Zn(2+). Residue Asn-336 participates in N-formimidoyl-L-glutamate binding.

Belongs to the metallo-dependent hydrolases superfamily. HutI family. Zn(2+) serves as cofactor. Fe(3+) is required as a cofactor.

The catalysed reaction is 4-imidazolone-5-propanoate + H2O = N-formimidoyl-L-glutamate. It functions in the pathway amino-acid degradation; L-histidine degradation into L-glutamate; N-formimidoyl-L-glutamate from L-histidine: step 3/3. This is Probable imidazolonepropionase (AMDHD1) from Homo sapiens (Human).